A 634-amino-acid chain; its full sequence is Threonine--tRNA ligase (634 aa).

A TGS domain is found at Met1–Thr61. Positions Asp243–Pro534 are catalytic. Positions 334, 385, and 511 each coordinate Zn(2+).

The protein belongs to the class-II aminoacyl-tRNA synthetase family. Homodimer. It depends on Zn(2+) as a cofactor.

It localises to the cytoplasm. The catalysed reaction is tRNA(Thr) + L-threonine + ATP = L-threonyl-tRNA(Thr) + AMP + diphosphate + H(+). Catalyzes the attachment of threonine to tRNA(Thr) in a two-step reaction: L-threonine is first activated by ATP to form Thr-AMP and then transferred to the acceptor end of tRNA(Thr). Also edits incorrectly charged L-seryl-tRNA(Thr). In Xanthomonas axonopodis pv. citri (strain 306), this protein is Threonine--tRNA ligase.